A 270-amino-acid chain; its full sequence is Formamidopyrimidine-DNA glycosylase (270 aa).

Catalysis depends on proline 2, which acts as the Schiff-base intermediate with DNA. Glutamate 3 functions as the Proton donor in the catalytic mechanism. Lysine 57 (proton donor; for beta-elimination activity) is an active-site residue. 3 residues coordinate DNA: histidine 90, arginine 109, and arginine 151. The FPG-type zinc finger occupies 236–270; that stretch reads QVYGRGGKLCMVCSNRLKEVRLGQRSTVYCTQCQR. Catalysis depends on arginine 260, which acts as the Proton donor; for delta-elimination activity.

The protein belongs to the FPG family. In terms of assembly, monomer. It depends on Zn(2+) as a cofactor.

It catalyses the reaction Hydrolysis of DNA containing ring-opened 7-methylguanine residues, releasing 2,6-diamino-4-hydroxy-5-(N-methyl)formamidopyrimidine.. It carries out the reaction 2'-deoxyribonucleotide-(2'-deoxyribose 5'-phosphate)-2'-deoxyribonucleotide-DNA = a 3'-end 2'-deoxyribonucleotide-(2,3-dehydro-2,3-deoxyribose 5'-phosphate)-DNA + a 5'-end 5'-phospho-2'-deoxyribonucleoside-DNA + H(+). In terms of biological role, involved in base excision repair of DNA damaged by oxidation or by mutagenic agents. Acts as a DNA glycosylase that recognizes and removes damaged bases. Has a preference for oxidized purines, such as 7,8-dihydro-8-oxoguanine (8-oxoG). Has AP (apurinic/apyrimidinic) lyase activity and introduces nicks in the DNA strand. Cleaves the DNA backbone by beta-delta elimination to generate a single-strand break at the site of the removed base with both 3'- and 5'-phosphates. This is Formamidopyrimidine-DNA glycosylase from Idiomarina loihiensis (strain ATCC BAA-735 / DSM 15497 / L2-TR).